Here is a 242-residue protein sequence, read N- to C-terminus: Lectin-like protein At1g53060 (242 aa).

A legume-lectin like region spans residues 3–237 (FHGDAEYASE…RHEILDWSFE (235 aa)). Phosphoserine is present on S207.

The protein belongs to the leguminous lectin family.

This Arabidopsis thaliana (Mouse-ear cress) protein is Lectin-like protein At1g53060.